The following is a 53-amino-acid chain: Small, acid-soluble spore protein O (53 aa).

The segment at 1–53 (MVRKKANHSRPGMNAAKAQGKDAGLTSQFHAEIGQEPLNQAQRQNNKKRKKNQ) is disordered.

The protein belongs to the SspO family.

The protein resides in the spore core. The protein is Small, acid-soluble spore protein O of Halalkalibacterium halodurans (strain ATCC BAA-125 / DSM 18197 / FERM 7344 / JCM 9153 / C-125) (Bacillus halodurans).